Here is a 277-residue protein sequence, read N- to C-terminus: Ribosomal RNA small subunit methyltransferase A (277 aa).

6 residues coordinate S-adenosyl-L-methionine: Asn27, Leu29, Gly54, Glu75, Asp95, and Asn118.

The protein belongs to the class I-like SAM-binding methyltransferase superfamily. rRNA adenine N(6)-methyltransferase family. RsmA subfamily.

The protein localises to the cytoplasm. It carries out the reaction adenosine(1518)/adenosine(1519) in 16S rRNA + 4 S-adenosyl-L-methionine = N(6)-dimethyladenosine(1518)/N(6)-dimethyladenosine(1519) in 16S rRNA + 4 S-adenosyl-L-homocysteine + 4 H(+). Functionally, specifically dimethylates two adjacent adenosines (A1518 and A1519) in the loop of a conserved hairpin near the 3'-end of 16S rRNA in the 30S particle. May play a critical role in biogenesis of 30S subunits. This chain is Ribosomal RNA small subunit methyltransferase A, found in Chlamydia trachomatis serovar L2 (strain ATCC VR-902B / DSM 19102 / 434/Bu).